The chain runs to 185 residues: Flavodoxin (185 aa).

A Flavodoxin-like domain is found at 4-159 (VLVIYDTRTG…ACRRLGRRLA (156 aa)).

Belongs to the flavodoxin family. FMN is required as a cofactor.

Its function is as follows. Low-potential electron donor to a number of redox enzymes. This is Flavodoxin (fldA) from Aquifex aeolicus (strain VF5).